An 853-amino-acid polypeptide reads, in one-letter code: Aminotransferase PigE (853 aa).

503–504 (GT) is a binding site for pyridoxal 5'-phosphate. At K645 the chain carries N6-(pyridoxal phosphate)lysine. T680 serves as a coordination point for pyridoxal 5'-phosphate.

Belongs to the class-III pyridoxal-phosphate-dependent aminotransferase family. In terms of assembly, homodimer. Pyridoxal 5'-phosphate serves as cofactor.

Its pathway is antibiotic biosynthesis; prodigiosin biosynthesis. Involved in the biosynthesis of 2-methyl-3-n-amyl-pyrrole (MAP), one of the terminal products involved in the biosynthesis of the red antibiotic prodigiosin (Pig). Catalyzes the transamination to the aldehyde group of 3-acetyloctanal, resulting in an aminoketone, which spontaneously cyclizes to yield the dihydro form of MAP (H2MAP). This Serratia sp. (strain FS14) protein is Aminotransferase PigE.